Here is a 566-residue protein sequence, read N- to C-terminus: MSVPVRYSSAAAEYAAEVDCELESTLQQQQQLHLQQQYEQYQHYQYQREQDIAYYCQLQAARQQEQLMQQRTSMSSSVMPGLALPQDHQDHPAALLNGPHNNNIGLAMDAHSINAILVDDEQPSTSAQAAAAAAASAGGSAGAGSGSGLGGAIGGGKLANGINRNAEMPTDWMRIADEGRYGTPGAAGLEYQKYEQQQQLEDLAESEAGAVGGASNNNGESSSSLKKLEDQLHALTSDELYETLKEYDVLQDKFHTVLLLPKESRREVTAGGRDGSAYVLRCLKMWYELPSDVLFSAMSLVDRFLDRMAVKPKHMACMSVASFHLAIKQLDLKPIPAEDLVTISQCGCTAGDLERMAGVIANKLGVQMGHAPITSVSYLRIYYALFRNLAKEIGGDFFKFYQQLIKLEELENRLEILMCDVKTTVITPSTLALVLICLHLDFHIKESYTRGSPELKHVFEYILFLQQYMRIPDRVFTCGFSIVSGILSHYNGQNKAPYKQRLVWKLSSRTLRVLRPINRFSSDLPTIEEGIPNALDDGLRSRTESISSEEEEDWPTSPIIPIFEQC.

The region spanning 285–368 is the Cyclin N-terminal domain; the sequence is MWYELPSDVL…VIANKLGVQM (84 aa).

The protein belongs to the cyclin family. Cyclin G subfamily. As to quaternary structure, interacts with corto. Interacts with the cyclin-dependent kinases Cdk2 and Cdk4. Interacts with Brca2 and Rad9. Interacts with polycomb protein Asx. Interacts with protein phosphatase 2A subunit wdb.

The protein resides in the chromosome. In terms of biological role, cyclin with roles in multiple processes including transcription, meiotic recombination repair, cell cycle regulation, and promotion of normal growth and metabolism. Binds to the promoter region of the homeobox gene Abd-B and is involved in maintaining Abd-B expression in the pupal epithelium. Involved in the transcriptional repression of the homeotic genes Scr and Ubx. Plays a role in meiotic recombination repair of DNA double-strand breaks which ensures efficient translation of grk and promotes grk activity in the oocyte, leading to oocyte dorso-ventral axis formation following secretion of grk from the oocyte and its binding to Egfr in the directly overlying follicle cells. Negatively regulates the binding of serine/threonine-protein kinase Akt1 to the protein phosphatase 2A subunit wdb, promoting normal growth and metabolism. Required for the formation of bilateral symmetry. Negatively regulates cell cycle progression by preventing G1 to S transition and retarding S-phase progression. The chain is Cyclin G from Drosophila melanogaster (Fruit fly).